Reading from the N-terminus, the 145-residue chain is 3-hydroxyacyl-[acyl-carrier-protein] dehydratase FabZ (145 aa).

Residue histidine 49 is part of the active site.

The protein belongs to the thioester dehydratase family. FabZ subfamily.

It localises to the cytoplasm. It catalyses the reaction a (3R)-hydroxyacyl-[ACP] = a (2E)-enoyl-[ACP] + H2O. Functionally, involved in unsaturated fatty acids biosynthesis. Catalyzes the dehydration of short chain beta-hydroxyacyl-ACPs and long chain saturated and unsaturated beta-hydroxyacyl-ACPs. The sequence is that of 3-hydroxyacyl-[acyl-carrier-protein] dehydratase FabZ from Rickettsia conorii (strain ATCC VR-613 / Malish 7).